Here is a 502-residue protein sequence, read N- to C-terminus: D-alanine--D-alanyl carrier protein ligase (502 aa).

Residue 150 to 151 participates in ATP binding; it reads TS. Asp195 contributes to the D-alanine binding site. 290–295 contributes to the ATP binding site; the sequence is NTYGPT. Val299 is a D-alanine binding site. Positions 381 and 490 each coordinate ATP. Lys490 contacts D-alanine.

This sequence belongs to the ATP-dependent AMP-binding enzyme family. DltA subfamily.

It localises to the cytoplasm. The enzyme catalyses holo-[D-alanyl-carrier protein] + D-alanine + ATP = D-alanyl-[D-alanyl-carrier protein] + AMP + diphosphate. The protein operates within cell wall biogenesis; lipoteichoic acid biosynthesis. Its function is as follows. Catalyzes the first step in the D-alanylation of lipoteichoic acid (LTA), the activation of D-alanine and its transfer onto the D-alanyl carrier protein (Dcp) DltC. In an ATP-dependent two-step reaction, forms a high energy D-alanyl-AMP intermediate, followed by transfer of the D-alanyl residue as a thiol ester to the phosphopantheinyl prosthetic group of the Dcp. D-alanylation of LTA plays an important role in modulating the properties of the cell wall in Gram-positive bacteria, influencing the net charge of the cell wall. In Bacillus licheniformis (strain ATCC 14580 / DSM 13 / JCM 2505 / CCUG 7422 / NBRC 12200 / NCIMB 9375 / NCTC 10341 / NRRL NRS-1264 / Gibson 46), this protein is D-alanine--D-alanyl carrier protein ligase.